Reading from the N-terminus, the 152-residue chain is Nucleoside diphosphate kinase A (152 aa).

ATP contacts are provided by Lys12, Phe60, Arg88, and Thr94. Residue Lys100 forms a Glycyl lysine isopeptide (Lys-Gly) (interchain with G-Cter in ubiquitin) linkage. Arg105 and Asn115 together coordinate ATP. His118 acts as the Pros-phosphohistidine intermediate in catalysis. Phosphoserine occurs at positions 120 and 122. Lys124 carries the post-translational modification N6-acetyllysine. Position 125 is a phosphoserine (Ser125).

It belongs to the NDK family. As to quaternary structure, hexamer of two different chains: An and B (A6, A5B, A4B2, A3B3, A2B4, AB5, B6). Interacts with PRUNE1. Component of the SET complex, composed of at least ANP32A, APEX1, HMGB2, NME1, SET and TREX1. Within this complex, interacts directly with SET. Also interacts with TREX1, but only following translocation to the nucleus. Mg(2+) is required as a cofactor.

It localises to the cytoplasm. It is found in the nucleus. The enzyme catalyses a 2'-deoxyribonucleoside 5'-diphosphate + ATP = a 2'-deoxyribonucleoside 5'-triphosphate + ADP. The catalysed reaction is a ribonucleoside 5'-diphosphate + ATP = a ribonucleoside 5'-triphosphate + ADP. With respect to regulation, autophosphorylation at His-118 increases serine/threonine protein kinase activity of the enzyme. Interaction with the SET complex inhibits exonuclease activity. In terms of biological role, major role in the synthesis of nucleoside triphosphates other than ATP. The ATP gamma phosphate is transferred to the NDP beta phosphate via a ping-pong mechanism, using a phosphorylated active-site intermediate. Possesses nucleoside-diphosphate kinase, serine/threonine-specific protein kinase, geranyl and farnesyl pyrophosphate kinase, histidine protein kinase and 3'-5' exonuclease activities. Involved in cell proliferation, differentiation and development, signal transduction, G protein-coupled receptor endocytosis, and gene expression. Required for neural development including neural patterning and cell fate determination. During GZMA-mediated cell death, works in concert with TREX1. NME1 nicks one strand of DNA and TREX1 removes bases from the free 3' end to enhance DNA damage and prevent DNA end reannealing and rapid repair. This Mus musculus (Mouse) protein is Nucleoside diphosphate kinase A (Nme1).